Reading from the N-terminus, the 1498-residue chain is DNA-directed RNA polymerase subunit beta' (1498 aa).

Cys-67, Cys-69, Cys-82, and Cys-85 together coordinate Zn(2+). Positions 499, 501, and 503 each coordinate Mg(2+). 4 residues coordinate Zn(2+): Cys-867, Cys-943, Cys-950, and Cys-953.

This sequence belongs to the RNA polymerase beta' chain family. In terms of assembly, the RNAP catalytic core consists of 2 alpha, 1 beta, 1 beta' and 1 omega subunit. When a sigma factor is associated with the core the holoenzyme is formed, which can initiate transcription. It depends on Mg(2+) as a cofactor. The cofactor is Zn(2+).

The enzyme catalyses RNA(n) + a ribonucleoside 5'-triphosphate = RNA(n+1) + diphosphate. DNA-dependent RNA polymerase catalyzes the transcription of DNA into RNA using the four ribonucleoside triphosphates as substrates. This is DNA-directed RNA polymerase subunit beta' from Chlorobium luteolum (strain DSM 273 / BCRC 81028 / 2530) (Pelodictyon luteolum).